A 37-amino-acid polypeptide reads, in one-letter code: Cytochrome b6-f complex subunit 5 (37 aa).

Residues 5–25 (LLCGIVLGLIPITLAGLFVAA) traverse the membrane as a helical segment.

The protein belongs to the PetG family. As to quaternary structure, the 4 large subunits of the cytochrome b6-f complex are cytochrome b6, subunit IV (17 kDa polypeptide, PetD), cytochrome f and the Rieske protein, while the 4 small subunits are PetG, PetL, PetM and PetN. The complex functions as a dimer.

Its subcellular location is the cellular thylakoid membrane. Functionally, component of the cytochrome b6-f complex, which mediates electron transfer between photosystem II (PSII) and photosystem I (PSI), cyclic electron flow around PSI, and state transitions. PetG is required for either the stability or assembly of the cytochrome b6-f complex. The sequence is that of Cytochrome b6-f complex subunit 5 from Cyanothece sp. (strain PCC 7425 / ATCC 29141).